A 226-amino-acid chain; its full sequence is Histidine biosynthesis bifunctional protein HisIE (226 aa).

Positions 1–131 are phosphoribosyl-AMP cyclohydrolase; the sequence is MMPMNQEFIQ…STFNRPLSNT (131 aa). Residues 132–226 are phosphoribosyl-ATP pyrophosphohydrolase; sequence CSELFEVIKD…KRRQSKSNPK (95 aa).

This sequence in the N-terminal section; belongs to the PRA-CH family. It in the C-terminal section; belongs to the PRA-PH family.

It is found in the cytoplasm. It catalyses the reaction 1-(5-phospho-beta-D-ribosyl)-ATP + H2O = 1-(5-phospho-beta-D-ribosyl)-5'-AMP + diphosphate + H(+). It carries out the reaction 1-(5-phospho-beta-D-ribosyl)-5'-AMP + H2O = 1-(5-phospho-beta-D-ribosyl)-5-[(5-phospho-beta-D-ribosylamino)methylideneamino]imidazole-4-carboxamide. It functions in the pathway amino-acid biosynthesis; L-histidine biosynthesis; L-histidine from 5-phospho-alpha-D-ribose 1-diphosphate: step 2/9. It participates in amino-acid biosynthesis; L-histidine biosynthesis; L-histidine from 5-phospho-alpha-D-ribose 1-diphosphate: step 3/9. This chain is Histidine biosynthesis bifunctional protein HisIE, found in Prochlorococcus marinus (strain SARG / CCMP1375 / SS120).